The following is a 262-amino-acid chain: Hydroxyethylthiazole kinase (262 aa).

Met-43 contacts substrate. ATP contacts are provided by Arg-118 and Thr-164. Ala-191 contributes to the substrate binding site.

Belongs to the Thz kinase family. Requires Mg(2+) as cofactor.

The enzyme catalyses 5-(2-hydroxyethyl)-4-methylthiazole + ATP = 4-methyl-5-(2-phosphooxyethyl)-thiazole + ADP + H(+). The protein operates within cofactor biosynthesis; thiamine diphosphate biosynthesis; 4-methyl-5-(2-phosphoethyl)-thiazole from 5-(2-hydroxyethyl)-4-methylthiazole: step 1/1. Catalyzes the phosphorylation of the hydroxyl group of 4-methyl-5-beta-hydroxyethylthiazole (THZ). This Cereibacter sphaeroides (strain ATCC 17023 / DSM 158 / JCM 6121 / CCUG 31486 / LMG 2827 / NBRC 12203 / NCIMB 8253 / ATH 2.4.1.) (Rhodobacter sphaeroides) protein is Hydroxyethylthiazole kinase.